A 308-amino-acid polypeptide reads, in one-letter code: Ribonuclease HIII (308 aa).

The RNase H type-2 domain occupies 88 to 304 (FHCIGSDEAG…RDKAIHLMNQ (217 aa)). Positions 94, 95, and 199 each coordinate a divalent metal cation.

This sequence belongs to the RNase HII family. RnhC subfamily. Mn(2+) is required as a cofactor. It depends on Mg(2+) as a cofactor.

It localises to the cytoplasm. It carries out the reaction Endonucleolytic cleavage to 5'-phosphomonoester.. Endonuclease that specifically degrades the RNA of RNA-DNA hybrids. This chain is Ribonuclease HIII, found in Staphylococcus epidermidis (strain ATCC 12228 / FDA PCI 1200).